The following is a 294-amino-acid chain: Beta-lactamase (294 aa).

The first 27 residues, 1–27 (MFKKRGRQTVLIAAVLAFFTASSPLLA), serve as a signal peptide directing secretion. The Acyl-ester intermediate role is filled by Ser76. Glu174 serves as the catalytic Proton acceptor. 240–242 (KTG) is a binding site for substrate.

Belongs to the class-A beta-lactamase family.

It carries out the reaction a beta-lactam + H2O = a substituted beta-amino acid. In Citrobacter koseri (Citrobacter diversus), this protein is Beta-lactamase.